The chain runs to 357 residues: Cobalt-precorrin-5B C(1)-methyltransferase (357 aa).

The protein belongs to the CbiD family.

The enzyme catalyses Co-precorrin-5B + S-adenosyl-L-methionine = Co-precorrin-6A + S-adenosyl-L-homocysteine. It participates in cofactor biosynthesis; adenosylcobalamin biosynthesis; cob(II)yrinate a,c-diamide from sirohydrochlorin (anaerobic route): step 6/10. Catalyzes the methylation of C-1 in cobalt-precorrin-5B to form cobalt-precorrin-6A. In Rhodospirillum rubrum (strain ATCC 11170 / ATH 1.1.1 / DSM 467 / LMG 4362 / NCIMB 8255 / S1), this protein is Cobalt-precorrin-5B C(1)-methyltransferase.